The chain runs to 253 residues: HTH-type transcriptional regulator YdeO (253 aa).

The HTH araC/xylS-type domain occupies 137-233 (GKVRNIVNMK…GNSPKRVSKE (97 aa)). DNA-binding regions (H-T-H motif) lie at residues 154–175 (KDIC…KQEQ) and 200–223 (VNKI…RKHF).

Its function is as follows. Induces the expression of gadE and mdtEF. Could also regulate the expression of other genes involved in acid resistance. This chain is HTH-type transcriptional regulator YdeO, found in Escherichia coli O157:H7.